We begin with the raw amino-acid sequence, 892 residues long: MGEKLDPELSSDGPHTKSSSKGQGTSTDNAPASKRRCVSTACIACRRRKSKCDGNLPSCAACSSVYHTTCVYDPNSDHRRKGVYKKDTDTLRTKNSTLLTLIQALLNYEEEDAFDLVRQIRSCDNLEDVAQSLVNQEKKSSGWLSNAVIHEENDIAQTDQFESELAGKMSNLVLDGSRKFIGGTSNLIFLPPGSELNEFKPGLATNGDLEGSVTRWTTVTDDQQLISHLLTMYFSWHYPFFTTLSKELFYRDYSRGVPSQYCSSLLVNTMLALGCHFSSWPGAREDPDNSATAGDHFFKEAKRLILDNDELVNSKLCTVQALALMSVREAGCGREGKGWVYSGMSFRMAFDLGLNLESSSLRDLSEEEIDARRITFWGCFLFDKCWSNYLGRQPQFTTANTSVSAVDILPNEESTLWSPYSDMGPSREYAQPSRTRAVADQISQLCKISGDLVVFFYDLAPKEKPSSKQLELKKLSEIHTRLEAWKKGLPKELEPREGQLPQALLMHMFYQLLLIHLYRPFLKYTKSTSPLPQHVSPRKLCTQAAAAISKLLRLYKRTYGFKQICNIAVYIAHTALTIHLLNLPEKNAQRDVIHGLRHLEEMGESWLCARRTLRILDISASKWQVQLPREAVIVFEQTHARWGSWGPWDQAASPSTTSDSPPSVSSQSVVATTDLSQPVSQSAGNQPANPSMGTSPNLTQPVASQYSSTPSGPVSVSAMRAVQRSFSAQLAHNEARQPEPTYLRPVSTSYGPVPSTQSAQEQWYSPTEAQFRAFTAAHSMPTTSAQSPLTTFDTPENLVEESQDWWSRDVNALQLGAEDWTQNWNNGLPTTSADWRYVDNVPNIPSTSAPDADYKPPQPPPNMARPNQYPTDPVANVNSNQTNMIFPGSFQR.

The interval 1-32 (MGEKLDPELSSDGPHTKSSSKGQGTSTDNAPA) is disordered. Positions 16–27 (TKSSSKGQGTST) are enriched in low complexity. A DNA-binding region (zn(2)-C6 fungal-type) is located at residues 42–70 (CIACRRRKSKCDGNLPSCAACSSVYHTTC). 3 disordered regions span residues 646 to 714 (GPWD…SGPV), 731 to 761 (AHNEARQPEPTYLRPVSTSYGPVPSTQSAQE), and 842 to 892 (PNIP…SFQR). Residues 649–674 (DQAASPSTTSDSPPSVSSQSVVATTD) are compositionally biased toward low complexity. Polar residues-rich tracts occupy residues 675 to 714 (LSQPVSQSAGNQPANPSMGTSPNLTQPVASQYSSTPSGPV), 746 to 761 (VSTSYGPVPSTQSAQE), and 876 to 892 (NVNSNQTNMIFPGSFQR).

It localises to the nucleus. Pathway-specific regulatory gene of nitrate assimilation; it activates the transcription of the genes for nitrate and nitrite reductases (niaD and niiA). This is Nitrogen assimilation transcription factor nirA (nirA) from Emericella nidulans (strain FGSC A4 / ATCC 38163 / CBS 112.46 / NRRL 194 / M139) (Aspergillus nidulans).